Here is a 375-residue protein sequence, read N- to C-terminus: 23S rRNA (uracil(747)-C(5))-methyltransferase RlmC (375 aa).

[4Fe-4S] cluster contacts are provided by C3, C11, C14, and C87. S-adenosyl-L-methionine contacts are provided by Q212, F241, E262, and N307. C334 functions as the Nucleophile in the catalytic mechanism.

Belongs to the class I-like SAM-binding methyltransferase superfamily. RNA M5U methyltransferase family. RlmC subfamily.

It catalyses the reaction uridine(747) in 23S rRNA + S-adenosyl-L-methionine = 5-methyluridine(747) in 23S rRNA + S-adenosyl-L-homocysteine + H(+). Its function is as follows. Catalyzes the formation of 5-methyl-uridine at position 747 (m5U747) in 23S rRNA. In Salmonella arizonae (strain ATCC BAA-731 / CDC346-86 / RSK2980), this protein is 23S rRNA (uracil(747)-C(5))-methyltransferase RlmC.